Here is a 359-residue protein sequence, read N- to C-terminus: 5-amino-6-(D-ribitylamino)uracil--L-tyrosine 4-hydroxyphenyl transferase (359 aa).

The 238-residue stretch at 45 to 282 folds into the Radical SAM core domain; the sequence is VTYVVNANIN…TYAVSRIFFK (238 aa). Residues Cys59, Cys63, and Cys66 each contribute to the [4Fe-4S] cluster site.

Belongs to the radical SAM superfamily. CofH family. Consists of two subunits, CofG and CofH. Requires [4Fe-4S] cluster as cofactor.

The catalysed reaction is 5-amino-6-(D-ribitylamino)uracil + L-tyrosine + S-adenosyl-L-methionine = 5-amino-5-(4-hydroxybenzyl)-6-(D-ribitylimino)-5,6-dihydrouracil + 2-iminoacetate + 5'-deoxyadenosine + L-methionine + H(+). It participates in cofactor biosynthesis; coenzyme F0 biosynthesis. Functionally, catalyzes the radical-mediated synthesis of 5-amino-5-(4-hydroxybenzyl)-6-(D-ribitylimino)-5,6-dihydrouracil from 5-amino-6-(D-ribitylamino)uracil and L-tyrosine. This chain is 5-amino-6-(D-ribitylamino)uracil--L-tyrosine 4-hydroxyphenyl transferase, found in Methanococcus maripaludis (strain C6 / ATCC BAA-1332).